The sequence spans 1687 residues: PH domain leucine-rich repeat-containing protein phosphatase 1 (1687 aa).

N-acetylmethionine is present on M1. 2 disordered regions span residues 1–96 and 230–406; these read MEPA…GGGA and AAAP…AAPD. Positions 78 to 96 are enriched in low complexity; sequence APQPAAGGAAPVPAAGGGA. At S286 the chain carries Phosphoserine. A compositionally biased stretch (polar residues) spans 314-326; that stretch reads DTESFSLSPSAES. Residue S372 is modified to Phosphoserine. The 101-residue stretch at 492 to 592 folds into the PH domain; that stretch reads RIQLSGMYNV…WLRQVSKVAS (101 aa). LRR repeat units lie at residues 594 to 615, 617 to 638, 648 to 669, 671 to 692, 694 to 715, 717 to 739, 740 to 760, 764 to 785, 788 to 809, 829 to 850, 851 to 872, 874 to 895, 897 to 918, 919 to 940, 943 to 964, 969 to 989, 993 to 1014, 1017 to 1038, 1040 to 1061, 1062 to 1083, and 1085 to 1106; these read RISS…LFYS, DLTH…PAAR, KLKS…VCSI, TLAE…VGDM, NLQT…LESM, QLSY…EKLT, AVDK…QALR, HIKH…EVDF, HVTQ…IFNN, FLKA…PVPN, YLSY…VCES, KLEV…LFCN, SLRK…LERT, SVEV…LLMK, SLRF…TLSE, ILQE…PLLT, RLKI…KMAK, ELEE…IMNC, RMHT…MQLP, EVKC…ENLP, and KLQE…SLEL. The region spanning 1131–1378 is the PPM-type phosphatase domain; that stretch reads SHGYTEASGV…DSISAVVVQL (248 aa). Mn(2+)-binding residues include D1166, G1167, K1330, and D1369. Disordered regions lie at residues 1414 to 1465 and 1604 to 1687; these read DRPS…SSPA and PGGY…DTPL. Positions 1424-1445 are enriched in low complexity; sequence SSSSGMASEISSELSTSEMSSE. Positions 1649–1669 are enriched in pro residues; the sequence is LPPPPQPPQPQPQPQPQPQPQ. The short motif at 1685–1687 is the PDZ-binding element; sequence TPL.

As to quaternary structure, interacts with the nucleotide free form of K-Ras (KRAS) via its LRR repeats. Interacts with AKT2, AKT3 and PRKCB. Interacts with WDR48 and USP12. Mn(2+) serves as cofactor. Isoforms 1 and 2 are expressed in the retina.

Its subcellular location is the cytoplasm. The protein localises to the membrane. It is found in the nucleus. The enzyme catalyses O-phospho-L-seryl-[protein] + H2O = L-seryl-[protein] + phosphate. It catalyses the reaction O-phospho-L-threonyl-[protein] + H2O = L-threonyl-[protein] + phosphate. With respect to regulation, insensitive to okadaic acid. Deubiquitination by WDR48-USP12 complex positively regulates PHLPP1 stability. Functionally, protein phosphatase involved in regulation of Akt and PKC signaling. Mediates dephosphorylation in the C-terminal domain hydrophobic motif of members of the AGC Ser/Thr protein kinase family; specifically acts on 'Ser-473' of AKT2 and AKT3, 'Ser-660' of PRKCB and 'Ser-657' of PRKCA. Isoform 2 seems to have a major role in regulating Akt signaling in hippocampal neurons. Akt regulates the balance between cell survival and apoptosis through a cascade that primarily alters the function of transcription factors that regulate pro- and antiapoptotic genes. Dephosphorylation of 'Ser-473' of Akt triggers apoptosis and suppression of tumor growth. Dephosphorylation of PRKCA and PRKCB leads to their destabilization and degradation. Dephosphorylates STK4 on 'Thr-387' leading to STK4 activation and apoptosis. Dephosphorylates RPS6KB1 and is involved in regulation of cap-dependent translation. Inhibits cancer cell proliferation and may act as a tumor suppressor. Dephosphorylates RAF1 inhibiting its kinase activity. May act as a negative regulator of K-Ras signaling in membrane rafts. Involved in the hippocampus-dependent long-term memory formation. Involved in circadian control by regulating the consolidation of circadian periodicity after resetting. Involved in development and function of regulatory T-cells. In Mus musculus (Mouse), this protein is PH domain leucine-rich repeat-containing protein phosphatase 1 (Phlpp1).